A 424-amino-acid chain; its full sequence is Elongation factor 1-alpha (424 aa).

In terms of domain architecture, tr-type G spans 5–223; that stretch reads KPHMNLVIIG…NALQVPAKPV (219 aa). The interval 14 to 21 is G1; sequence GHVDHGKS. 14–21 lines the GTP pocket; that stretch reads GHVDHGKS. Ser-21 serves as a coordination point for Mg(2+). Positions 70–74 are G2; the sequence is GVTID. The interval 91–94 is G3; that stretch reads DAPG. GTP-binding positions include 91 to 95 and 148 to 151; these read DAPGH and NKMD. The segment at 148-151 is G4; sequence NKMD. The segment at 187 to 189 is G5; it reads SGY.

The protein belongs to the TRAFAC class translation factor GTPase superfamily. Classic translation factor GTPase family. EF-Tu/EF-1A subfamily.

It is found in the cytoplasm. It catalyses the reaction GTP + H2O = GDP + phosphate + H(+). In terms of biological role, GTP hydrolase that promotes the GTP-dependent binding of aminoacyl-tRNA to the A-site of ribosomes during protein biosynthesis. The protein is Elongation factor 1-alpha of Picrophilus torridus (strain ATCC 700027 / DSM 9790 / JCM 10055 / NBRC 100828 / KAW 2/3).